Consider the following 247-residue polypeptide: Probable transcriptional regulatory protein lpl1249 (247 aa).

The protein belongs to the TACO1 family.

It is found in the cytoplasm. This Legionella pneumophila (strain Lens) protein is Probable transcriptional regulatory protein lpl1249.